Reading from the N-terminus, the 843-residue chain is Translation initiation factor IF-2 (843 aa).

Disordered stretches follow at residues 50–72 and 94–260; these read LKSS…KTTS and QRSP…TGPV. Positions 96 to 135 are enriched in basic and acidic residues; the sequence is SPEEIQAEQKREQDERRAAENAARDKVDADVRQRNEEQAR. Residues 139–173 are compositionally biased toward low complexity; it reads TATAAAAPAAKAEPAPAAAAPAPAPVVADAPASED. Basic and acidic residues-rich tracts occupy residues 174–203 and 227–236; these read AAAR…RGEA and TTDEESDGAR. The span at 237–250 shows a compositional bias: basic residues; sequence RGRGGKGKLKKRNQ. Residues 343–516 form the tr-type G domain; sequence SRAPVVTVMG…EVLELTATPT (174 aa). The G1 stretch occupies residues 352–359; that stretch reads GHVDHGKT. A GTP-binding site is contributed by 352–359; that stretch reads GHVDHGKT. The interval 377 to 381 is G2; it reads GITQH. Residues 398–401 form a G3 region; it reads DTPG. Residues 398 to 402 and 452 to 455 contribute to the GTP site; these read DTPGH and NKID. The interval 452–455 is G4; it reads NKID. Residues 488–490 are G5; it reads SAK.

It belongs to the TRAFAC class translation factor GTPase superfamily. Classic translation factor GTPase family. IF-2 subfamily.

The protein resides in the cytoplasm. In terms of biological role, one of the essential components for the initiation of protein synthesis. Protects formylmethionyl-tRNA from spontaneous hydrolysis and promotes its binding to the 30S ribosomal subunits. Also involved in the hydrolysis of GTP during the formation of the 70S ribosomal complex. This Pseudomonas putida (strain W619) protein is Translation initiation factor IF-2.